Here is a 264-residue protein sequence, read N- to C-terminus: MKKLKLHGFNNLTKSLSFCIYDICYAKTAEERDGYIAYIDELYNANRLTEILSETCSIIGANILNIARQDYEPQGASVTILVSEEPVDPKLIDQTEHPGPLPETVVAHLDKSHICVHTYPESHPEGGLCTFRADIEVSTCGVISPLKALNYLIHQLESDIVTIDYRVRGFTRDVNGMKHFIDHEINSIQNFMSEDMKSLYDMVDVNVYQENIFHTKMLLKEFDLKHYMFHTKPEDLTETERQQITAALWKEMREIYYGRNISAV.

Serine 112 (schiff-base intermediate with substrate; via pyruvic acid) is an active-site residue. At serine 112 the chain carries Pyruvic acid (Ser); by autocatalysis. Histidine 117 serves as the catalytic Proton acceptor; for processing activity. The Proton donor; for catalytic activity role is filled by cysteine 140.

Belongs to the prokaryotic AdoMetDC family. Type 2 subfamily. Heterooctamer of four alpha and four beta chains arranged as a tetramer of alpha/beta heterodimers. It depends on pyruvate as a cofactor. Post-translationally, is synthesized initially as an inactive proenzyme. Formation of the active enzyme involves a self-maturation process in which the active site pyruvoyl group is generated from an internal serine residue via an autocatalytic post-translational modification. Two non-identical subunits are generated from the proenzyme in this reaction, and the pyruvate is formed at the N-terminus of the alpha chain, which is derived from the carboxyl end of the proenzyme. The post-translation cleavage follows an unusual pathway, termed non-hydrolytic serinolysis, in which the side chain hydroxyl group of the serine supplies its oxygen atom to form the C-terminus of the beta chain, while the remainder of the serine residue undergoes an oxidative deamination to produce ammonia and the pyruvoyl group blocking the N-terminus of the alpha chain.

It catalyses the reaction S-adenosyl-L-methionine + H(+) = S-adenosyl 3-(methylsulfanyl)propylamine + CO2. It functions in the pathway amine and polyamine biosynthesis; S-adenosylmethioninamine biosynthesis; S-adenosylmethioninamine from S-adenosyl-L-methionine: step 1/1. Functionally, catalyzes the decarboxylation of S-adenosylmethionine to S-adenosylmethioninamine (dcAdoMet), the propylamine donor required for the synthesis of the polyamines spermine and spermidine from the diamine putrescine. The polypeptide is S-adenosylmethionine decarboxylase proenzyme (Salmonella dublin (strain CT_02021853)).